The following is a 105-amino-acid chain: Flagellar transcriptional regulator FlhD (105 aa).

This sequence belongs to the FlhD family. As to quaternary structure, homodimer; disulfide-linked. Forms a heterohexamer composed of two FlhC and four FlhD subunits. Each FlhC binds a FlhD dimer, forming a heterotrimer, and a hexamer assembles by dimerization of two heterotrimers.

The protein resides in the cytoplasm. In terms of biological role, functions in complex with FlhC as a master transcriptional regulator that regulates transcription of several flagellar and non-flagellar operons by binding to their promoter region. Activates expression of class 2 flagellar genes, including fliA, which is a flagellum-specific sigma factor that turns on the class 3 genes. Also regulates genes whose products function in a variety of physiological pathways. In Cupriavidus pinatubonensis (strain JMP 134 / LMG 1197) (Cupriavidus necator (strain JMP 134)), this protein is Flagellar transcriptional regulator FlhD.